We begin with the raw amino-acid sequence, 100 residues long: Glutamyl-tRNA(Gln) amidotransferase subunit C (100 aa).

It belongs to the GatC family. Heterotrimer of A, B and C subunits.

The enzyme catalyses L-glutamyl-tRNA(Gln) + L-glutamine + ATP + H2O = L-glutaminyl-tRNA(Gln) + L-glutamate + ADP + phosphate + H(+). The catalysed reaction is L-aspartyl-tRNA(Asn) + L-glutamine + ATP + H2O = L-asparaginyl-tRNA(Asn) + L-glutamate + ADP + phosphate + 2 H(+). In terms of biological role, allows the formation of correctly charged Asn-tRNA(Asn) or Gln-tRNA(Gln) through the transamidation of misacylated Asp-tRNA(Asn) or Glu-tRNA(Gln) in organisms which lack either or both of asparaginyl-tRNA or glutaminyl-tRNA synthetases. The reaction takes place in the presence of glutamine and ATP through an activated phospho-Asp-tRNA(Asn) or phospho-Glu-tRNA(Gln). The polypeptide is Glutamyl-tRNA(Gln) amidotransferase subunit C (Streptococcus pyogenes serotype M1).